Reading from the N-terminus, the 36-residue chain is Photosystem II reaction center protein Y (36 aa).

Topologically, residues 1–4 are lumenal; the sequence is MDSR. Residues 5-23 form a helical membrane-spanning segment; the sequence is LLVVLIPVLAAASWAVYNI. Over 24–36 the chain is Stromal; it reads GRVALQQFRKMTS.

Belongs to the PsbY family. As to quaternary structure, PSII is composed of 1 copy each of membrane proteins PsbA, PsbB, PsbC, PsbD, PsbE, PsbF, PsbH, PsbI, PsbJ, PsbK, PsbL, PsbM, PsbT, PsbX, PsbY, PsbZ, Psb30/Ycf12, at least 3 peripheral proteins of the oxygen-evolving complex and a large number of cofactors. It forms dimeric complexes.

The protein localises to the plastid. It is found in the chloroplast thylakoid membrane. Functionally, loosely associated component of the core of photosystem II (PSII), it is not always seen in crystals. PSII is a light-driven water plastoquinone oxidoreductase, using light energy to abstract electrons from H(2)O, generating a proton gradient subsequently used for ATP formation. This is Photosystem II reaction center protein Y from Pyropia yezoensis (Susabi-nori).